A 485-amino-acid chain; its full sequence is MKFVDEVRIFVKAGDGGNGAVSFRREKYIERGGPNGGDGGNGGSVVFVADPQLTTLLDYRYQQHHRARNGEHGMGSDCNGRAAEDMVLKVPVGTLVKDANTGELLVDLSEAGQRWVAAKGGRGGLGNMNFATSTRQTPRFAQDGTKGEELTLRLELKLLADVGLLGFPNAGKSTFISRVSRARPKVADYPFTTLVPNLGMVQYKDGLSFVMADIPGIIEGASEGVGLGHQFLRHVERCKVLIHLIDMGAEGEGRAPLHDFDVLNAELGKYSPELASKPQVVAANKLDLPDAQARLEGFTEALRERGIRVYPVSCATGEGMQPLMDSVAEVLFTGRTEKLHVEIPAKAARAGKAKTKAAEKKALARNAGAAAATKSATKKSAAAKKAVTKKAPARKAGAVAKTSAARKAGTAAAKKAPARKSGTAPVKKAAAKKAPARKSGTAPAKKSAVKKASARKSGSSGKAAAKKASAATKRAPARKSGGGRS.

The 159-residue stretch at 1 to 159 folds into the Obg domain; sequence MKFVDEVRIF…LTLRLELKLL (159 aa). Residues 160-332 form the OBG-type G domain; the sequence is ADVGLLGFPN…LMDSVAEVLF (173 aa). Residues 166–173, 191–195, 213–216, 284–287, and 313–315 contribute to the GTP site; these read GFPNAGKS, FTTLV, DIPG, NKLD, and SCA. The Mg(2+) site is built by Ser173 and Thr193. Composition is skewed to low complexity over residues 367 to 385, 394 to 428, 437 to 446, and 455 to 474; these read AGAA…AAKK, RKAG…PVKK, RKSGTAPAKK, and RKSG…ATKR. Residues 367–485 form a disordered region; that stretch reads AGAAAATKSA…PARKSGGGRS (119 aa).

This sequence belongs to the TRAFAC class OBG-HflX-like GTPase superfamily. OBG GTPase family. Monomer. Mg(2+) is required as a cofactor.

Its subcellular location is the cytoplasm. In terms of biological role, an essential GTPase which binds GTP, GDP and possibly (p)ppGpp with moderate affinity, with high nucleotide exchange rates and a fairly low GTP hydrolysis rate. Plays a role in control of the cell cycle, stress response, ribosome biogenesis and in those bacteria that undergo differentiation, in morphogenesis control. The polypeptide is GTPase Obg (Myxococcus xanthus (strain DK1622)).